We begin with the raw amino-acid sequence, 144 residues long: Small ribosomal subunit protein uS12 (144 aa).

A disordered region spans residues 1 to 55 (MPTINQLVRKGREDKVVKSKSPALQKGYNSFKKSQTNQSSPQKRGVCTRVGTMTP). Positions 27–42 (GYNSFKKSQTNQSSPQ) are enriched in polar residues. At Asp-102 the chain carries 3-methylthioaspartic acid. The interval 119–144 (GVNNRKQGRSKYGTKRPKPGQAAAKK) is disordered. Residues 124-144 (KQGRSKYGTKRPKPGQAAAKK) show a composition bias toward basic residues.

The protein belongs to the universal ribosomal protein uS12 family. As to quaternary structure, part of the 30S ribosomal subunit. Contacts proteins S8 and S17. May interact with IF1 in the 30S initiation complex.

Its function is as follows. With S4 and S5 plays an important role in translational accuracy. In terms of biological role, interacts with and stabilizes bases of the 16S rRNA that are involved in tRNA selection in the A site and with the mRNA backbone. Located at the interface of the 30S and 50S subunits, it traverses the body of the 30S subunit contacting proteins on the other side and probably holding the rRNA structure together. The combined cluster of proteins S8, S12 and S17 appears to hold together the shoulder and platform of the 30S subunit. This is Small ribosomal subunit protein uS12 from Brevibacillus brevis (strain 47 / JCM 6285 / NBRC 100599).